Consider the following 325-residue polypeptide: MQQFLRYNINVIKEDNDKNYGKYIVKPLEKGFGITLGNALRRVMLSHLPGSSVFALKIKGISHEFGFIPGVKEDVTQIILNIKNLVVWISDNMITDETLSETPIEKWPVMTIRANKAGIIKAGDIECPLGFEVFNKDLEICTLSEDAEVAIDIYATRGRGFKTAAENRSEIGSLSIIPIDSNFNPIIKVGYHVEEETSDVITDKLIIEVGTNGLIKSGDAIAIASKILSDHLKPLIDINKSLHDIQVLNEKNVEEKNKKLSIPIEQLDLTVRSYNCLKRHGIQTVEELVTRSKSEIENIRNLGKKSVREINKKLSELYDLKLKNN.

The interval 1-239 (MQQFLRYNIN…DHLKPLIDIN (239 aa)) is alpha N-terminal domain (alpha-NTD). An alpha C-terminal domain (alpha-CTD) region spans residues 255 to 325 (EKNKKLSIPI…ELYDLKLKNN (71 aa)).

The protein belongs to the RNA polymerase alpha chain family. In terms of assembly, homodimer. The RNAP catalytic core consists of 2 alpha, 1 beta, 1 beta' and 1 omega subunit. When a sigma factor is associated with the core the holoenzyme is formed, which can initiate transcription.

The enzyme catalyses RNA(n) + a ribonucleoside 5'-triphosphate = RNA(n+1) + diphosphate. In terms of biological role, DNA-dependent RNA polymerase catalyzes the transcription of DNA into RNA using the four ribonucleoside triphosphates as substrates. The protein is DNA-directed RNA polymerase subunit alpha of Mycoplasmoides gallisepticum (strain R(low / passage 15 / clone 2)) (Mycoplasma gallisepticum).